The primary structure comprises 830 residues: Heavy metal tolerance protein (830 aa).

The signal sequence occupies residues 1-27; sequence MVLRYNSPRLNILELVLLYVGFFSIGS. 3 helical membrane passes run 51–71, 88–108, and 126–146; these read PIGIISWWILGIALTYVVDIS, TTVVCLILFLLFWIIVLISCA, and LSVLYVWAIDIVFETIFIVYS. N-linked (GlcNAc...) asparagine glycosylation is present at Asn150. The next 3 helical transmembrane spans lie at 156-176, 263-283, and 304-324; these read IVLADHVARLVLCVFATAIYL, FQIFICIVLLFLGRAVNILAP, and DVILFVIYRFLQGNMGVIGSL. Residues 265 to 550 enclose the ABC transmembrane type-1 domain; that stretch reads IFICIVLLFL…FGTLYRSLQN (286 aa). The N-linked (GlcNAc...) asparagine glycan is linked to Asn350. 2 consecutive transmembrane segments (helical) span residues 381 to 401 and 403 to 423; these read VVFQIGPVLLDLGVAMVYFFI and FDIYFTLIVLIMTLCYCYVTV. Glutathione is bound by residues 429–433, 492–495, and Gly542; these read RTEAR and NIVQ. The chain crosses the membrane as a helical span at residues 490–511; sequence FLNIVQGGIFTFSLAIACLLSA. The 235-residue stretch at 584 to 818 folds into the ABC transporter domain; it reads VIFSHVSFAY…DGGAYKKMWF (235 aa). ATP-binding positions include Tyr593 and 617 to 628; that span reads GESGGGKSTIMR.

This sequence belongs to the ABC transporter superfamily. ABCB family. Heavy Metal importer (TC 3.A.1.210) subfamily.

The protein resides in the vacuole membrane. Its function is as follows. Involved in metal tolerance. Probably involved in the transport of metal-bound phytochelatins. Compartmentalizes cadmium within vacuoles, thereby protecting cells from cadmium toxicity. This Schizosaccharomyces pombe (strain 972 / ATCC 24843) (Fission yeast) protein is Heavy metal tolerance protein (hmt1).